Here is a 280-residue protein sequence, read N- to C-terminus: Retinoschisin (280 aa).

The signal sequence occupies residues 1-23 (MHLPREAFLLALAGAFIFPSSQQ). An F5/8 type C domain is found at 119–275 (CPYHRPLGFE…IALRLELLLC (157 aa)). Disulfide bonds link cysteine 119/cysteine 275 and cysteine 166/cysteine 198.

In terms of assembly, homooctamer of 4 homodimers; disulfide-linked. The homooctamer has a flat, cogwheel structure with a diameter of about 14 nm. Two stacked octamers can assemble to form a hexadecamer.

The protein resides in the secreted. Its subcellular location is the cell membrane. Its function is as follows. Binds negatively charged membrane lipids, such as phosphatidylserine and phosphoinositides. May play a role in cell-cell adhesion processes in the retina, via homomeric interaction between octamers present on the surface of two neighboring cells. Required for normal structure and function of the retina. This Takifugu rubripes (Japanese pufferfish) protein is Retinoschisin (xlrs1).